A 268-amino-acid polypeptide reads, in one-letter code: Cyclohexadienyl dehydratase (268 aa).

Residues 1–25 (MPKSFRHLVQALACLALLASASLQA) form the signal peptide.

This sequence belongs to the bacterial solute-binding protein 3 family. Homodimer.

The protein resides in the periplasm. It carries out the reaction prephenate + H(+) = 3-phenylpyruvate + CO2 + H2O. It catalyses the reaction L-arogenate + H(+) = L-phenylalanine + CO2 + H2O. It functions in the pathway amino-acid biosynthesis; L-phenylalanine biosynthesis; L-phenylalanine from L-arogenate: step 1/1. Its pathway is amino-acid biosynthesis; L-phenylalanine biosynthesis; phenylpyruvate from prephenate: step 1/1. Forms alternative pathway for phenylalanine biosynthesis. Can catalyze two reactions: prephenate dehydratase and arogenate dehydratase. May have a role in chemotaxis or transport. The polypeptide is Cyclohexadienyl dehydratase (pheC) (Pseudomonas aeruginosa (strain ATCC 15692 / DSM 22644 / CIP 104116 / JCM 14847 / LMG 12228 / 1C / PRS 101 / PAO1)).